We begin with the raw amino-acid sequence, 255 residues long: Arginine-binding extracellular protein ArtP (255 aa).

Residues 1–19 (MKKWLLLLVAACITFALTA) form the signal peptide. Cys-20 carries N-palmitoyl cysteine lipidation. A lipid anchor (S-diacylglycerol cysteine) is attached at Cys-20.

It belongs to the bacterial solute-binding protein 3 family.

The protein localises to the cell membrane. Its function is as follows. Part of a binding-protein-dependent transport system for arginine. The polypeptide is Arginine-binding extracellular protein ArtP (artP) (Bacillus subtilis (strain 168)).